The following is a 205-amino-acid chain: ATP synthase subunit b (205 aa).

Residues 45 to 65 (LGMTATAWVSLAMVIVILLLL) traverse the membrane as a helical segment.

This sequence belongs to the ATPase B chain family. As to quaternary structure, F-type ATPases have 2 components, F(1) - the catalytic core - and F(0) - the membrane proton channel. F(1) has five subunits: alpha(3), beta(3), gamma(1), delta(1), epsilon(1). F(0) has three main subunits: a(1), b(2) and c(10-14). The alpha and beta chains form an alternating ring which encloses part of the gamma chain. F(1) is attached to F(0) by a central stalk formed by the gamma and epsilon chains, while a peripheral stalk is formed by the delta and b chains.

Its subcellular location is the cell inner membrane. F(1)F(0) ATP synthase produces ATP from ADP in the presence of a proton or sodium gradient. F-type ATPases consist of two structural domains, F(1) containing the extramembraneous catalytic core and F(0) containing the membrane proton channel, linked together by a central stalk and a peripheral stalk. During catalysis, ATP synthesis in the catalytic domain of F(1) is coupled via a rotary mechanism of the central stalk subunits to proton translocation. In terms of biological role, component of the F(0) channel, it forms part of the peripheral stalk, linking F(1) to F(0). The chain is ATP synthase subunit b from Rhizorhabdus wittichii (strain DSM 6014 / CCUG 31198 / JCM 15750 / NBRC 105917 / EY 4224 / RW1) (Sphingomonas wittichii).